We begin with the raw amino-acid sequence, 1064 residues long: Pre-mRNA-processing ATP-dependent RNA helicase PRP5 (1064 aa).

Disordered stretches follow at residues Thr-22–Ala-63, Glu-97–Lys-170, Phe-211–Asp-231, Glu-257–Asp-305, and Gly-320–Phe-346. A compositionally biased stretch (polar residues) spans Thr-42–Thr-57. Acidic residues predominate over residues Pro-220–Asp-231. Residues Gln-429–Met-457 carry the Q motif motif. Residues Leu-460 to Ile-638 enclose the Helicase ATP-binding domain. Ala-473–Thr-480 lines the ATP pocket. The DEAD box motif lies at Asp-586–Asp-589. The Helicase C-terminal domain occupies Arg-665 to Arg-813. The segment at Val-820 to Ala-872 is disordered. A compositionally biased stretch (basic and acidic residues) spans Gly-835–Val-848. The span at Gly-858–Glu-870 shows a compositional bias: acidic residues.

This sequence belongs to the DEAD box helicase family. DDX46/PRP5 subfamily.

The protein resides in the nucleus. It carries out the reaction ATP + H2O = ADP + phosphate + H(+). Its function is as follows. ATP-dependent RNA helicase involved spliceosome assembly and in nuclear splicing. Catalyzes an ATP-dependent conformational change of U2 snRNP. Bridges U1 and U2 snRNPs and enables stable U2 snRNP association with intron RNA. The polypeptide is Pre-mRNA-processing ATP-dependent RNA helicase PRP5 (PRP5) (Chaetomium globosum (strain ATCC 6205 / CBS 148.51 / DSM 1962 / NBRC 6347 / NRRL 1970) (Soil fungus)).